Consider the following 437-residue polypeptide: Double-stranded RNA-binding protein 3 (437 aa).

The tract at residues 1-22 (MKKKSAPTPLPPETANTSPAPI) is disordered. DRBM domains lie at 35-104 (VFKS…EIVK) and 120-187 (LCKN…AIQG). 2 stretches are compositionally biased toward basic and acidic residues: residues 288-310 (AKRV…ENQH) and 320-330 (DEARVEQEPSR). Positions 288–331 (AKRVEDEPPRDIEMVQPDKENQHSDAALVQPDDEARVEQEPSRD) are disordered.

Functionally, binds double-stranded RNA. The sequence is that of Double-stranded RNA-binding protein 3 (DRB3) from Oryza sativa subsp. japonica (Rice).